We begin with the raw amino-acid sequence, 580 residues long: CDKN2A-interacting protein (580 aa).

Ala2 carries the N-acetylalanine modification. The 115-residue stretch at 19–133 (VEALRCDGET…KVKKRGISSS (115 aa)) folds into the XRN2-binding (XTBD) domain. The segment at 129-356 (GISSSNEGVE…PKSSSSTNTS (228 aa)) is disordered. Ser131 is modified (phosphoserine). Over residues 155-167 (EQDHAKTSAKTER) the composition is skewed to basic and acidic residues. The segment covering 168–179 (ASAQQENSSTCI) has biased composition (polar residues). Lys184 participates in a covalent cross-link: Glycyl lysine isopeptide (Lys-Gly) (interchain with G-Cter in SUMO1). Residues 185–228 (SESGNSARSSGISSQNSSTSDGDRSVSSQSSSSVSSQVTTAGSG) are compositionally biased toward low complexity. Positions 231-240 (SEAEAPDKHG) are enriched in basic and acidic residues. Residue Ser241 is modified to Phosphoserine. A compositionally biased stretch (polar residues) spans 248–269 (LKSSVNSHMTQSTDSRQQSGSP). 2 stretches are compositionally biased toward low complexity: residues 274-313 (LEGS…PSSE) and 321-356 (SKTS…TNTS). Thr346 is subject to Phosphothreonine. Ser389 carries the phosphoserine modification. The 76-residue stretch at 462 to 537 (NHGELLNAAI…SREALKLFLK (76 aa)) folds into the DRBM domain.

It belongs to the CARF family. In terms of assembly, interacts with CDKN2A/p14ARF, p53/TP53 and MDM2. Interacts with CHEK2 and MAPK3. Interacts with XRN2. In terms of processing, may be ubiquitinated. As to expression, ubiquitously expressed.

It localises to the nucleus. The protein resides in the nucleoplasm. Regulates DNA damage response in a dose-dependent manner through a number of signaling pathways involved in cell proliferation, apoptosis and senescence. The chain is CDKN2A-interacting protein (CDKN2AIP) from Homo sapiens (Human).